The sequence spans 581 residues: Alpha-amylase 2 (581 aa).

The signal sequence occupies residues 1 to 24 (MNYRRNICLRIGWMLLFAFIPAYA). Residues Cys-56 and Cys-64 are joined by a disulfide bond. Trp-109 is a substrate binding site. Asn-147 lines the Ca(2+) pocket. An intrachain disulfide couples Cys-176 to Cys-191. Residue Asp-202 coordinates Ca(2+). Position 231 (Arg-231) interacts with substrate. Ca(2+) contacts are provided by Asp-233, His-237, and Glu-257. Asp-233 (nucleophile) is an active-site residue. 236-237 (KH) provides a ligand contact to substrate. The active-site Proton donor is Glu-257. Substrate is bound at residue Gly-261. Cysteines 267 and 311 form a disulfide. Asn-291 carries an N-linked (GlcNAc...) asparagine glycan. Residue Asp-325 participates in substrate binding. N-linked (GlcNAc...) asparagine glycosylation occurs at Asn-332. Arg-372 is a substrate binding site. Residue Ser-551 is the site of GPI-anchor amidated serine attachment. A propeptide spans 552–581 (EAKTIRSFTKLKLFILLIAVPFALPMIILI) (removed in mature form).

It belongs to the glycosyl hydrolase 13 family. Ca(2+) is required as a cofactor.

Its subcellular location is the cell membrane. It catalyses the reaction Endohydrolysis of (1-&gt;4)-alpha-D-glucosidic linkages in polysaccharides containing three or more (1-&gt;4)-alpha-linked D-glucose units.. This Schizosaccharomyces pombe (strain 972 / ATCC 24843) (Fission yeast) protein is Alpha-amylase 2 (aah2).